The sequence spans 109 residues: Large ribosomal subunit protein bL31B (109 aa).

Residues 79-109 (NVRQPAQQPQPEEDALPAAKGKKKVVTKKKK) are disordered. Residues 98-109 (KGKKKVVTKKKK) show a composition bias toward basic residues.

It belongs to the bacterial ribosomal protein bL31 family. Type B subfamily. As to quaternary structure, part of the 50S ribosomal subunit.

This Chlamydia pneumoniae (Chlamydophila pneumoniae) protein is Large ribosomal subunit protein bL31B.